A 520-amino-acid chain; its full sequence is GMP synthase [glutamine-hydrolyzing] (520 aa).

The Glutamine amidotransferase type-1 domain maps to 12–205; it reads KIIVLDYGSQ…AISICGARGD (194 aa). Residue Cys89 is the Nucleophile of the active site. Catalysis depends on residues His179 and Glu181. One can recognise a GMPS ATP-PPase domain in the interval 206 to 395; it reads WSMDNFIDME…LGMPEEIVWR (190 aa). 233 to 239 is an ATP binding site; sequence SGGVDSS.

In terms of assembly, homodimer.

The enzyme catalyses XMP + L-glutamine + ATP + H2O = GMP + L-glutamate + AMP + diphosphate + 2 H(+). Its pathway is purine metabolism; GMP biosynthesis; GMP from XMP (L-Gln route): step 1/1. Functionally, catalyzes the synthesis of GMP from XMP. The chain is GMP synthase [glutamine-hydrolyzing] from Streptococcus pyogenes serotype M2 (strain MGAS10270).